We begin with the raw amino-acid sequence, 745 residues long: Aminopeptidase NAALADL1 (745 aa).

Residues 1–6 (MHWAKI) lie on the Cytoplasmic side of the membrane. A helical; Signal-anchor for type II membrane protein membrane pass occupies residues 7-28 (LGVGIGAAALLGLGIILGHFAI). Over 29 to 745 (PKATEPLASS…AATLQPVTDL (717 aa)) the chain is Extracellular. N-linked (GlcNAc...) asparagine glycosylation is found at Asn-128, Asn-141, and Asn-235. Ca(2+)-binding residues include Thr-263 and Leu-266. 3 N-linked (GlcNAc...) asparagine glycosylation sites follow: Asn-279, Asn-304, and Asn-350. A disulfide bridge connects residues Cys-301 and Cys-318. Positions 373 and 383 each coordinate Zn(2+). The active-site Proton donor/acceptor is the Glu-421. Glu-422 is a Zn(2+) binding site. Residues Glu-430 and Glu-433 each coordinate Ca(2+). Asp-450 provides a ligand contact to Zn(2+). 2 N-linked (GlcNAc...) asparagine glycosylation sites follow: Asn-456 and Asn-497. Residue His-550 coordinates Zn(2+). N-linked (GlcNAc...) asparagine glycosylation is found at Asn-593 and Asn-620.

This sequence belongs to the peptidase M28 family. M28B subfamily. As to quaternary structure, homodimer. Zn(2+) is required as a cofactor. In terms of processing, N-glycosylated. In terms of tissue distribution, detected on apical villi on the brush border membrane of ileum enterocytes (at protein level). Mainly expressed in the distal small intestine.

The protein resides in the apical cell membrane. Functionally, aminopeptidase with broad substrate specificity. Has lower activity with substrates that have Asp or Glu in the P2' position, or Pro in the P3' position. Lacks activity with substrates that have both Pro in the P3' position and Asp or Glu in the P2' position. Lacks carboxypeptidase activity. Lacks dipeptidyl-peptidase IV type activity. The polypeptide is Aminopeptidase NAALADL1 (Naaladl1) (Rattus norvegicus (Rat)).